A 338-amino-acid chain; its full sequence is Ketol-acid reductoisomerase (NADP(+)) (338 aa).

Residues 1-181 (MKIYYDKDCN…GGGRAGIIET (181 aa)) enclose the KARI N-terminal Rossmann domain. NADP(+) contacts are provided by residues 24-27 (YGSQ), Lys47, Ser50, Ser52, and 82-85 (DEIQ). His107 is a catalytic residue. Residue Gly133 participates in NADP(+) binding. The 146-residue stretch at 182–327 (SFKEETETDL…ARLRSMMSWI (146 aa)) folds into the KARI C-terminal knotted domain. The Mg(2+) site is built by Asp190, Glu194, Glu226, and Glu230. Ser251 provides a ligand contact to substrate.

This sequence belongs to the ketol-acid reductoisomerase family. Mg(2+) serves as cofactor.

The enzyme catalyses (2R)-2,3-dihydroxy-3-methylbutanoate + NADP(+) = (2S)-2-acetolactate + NADPH + H(+). The catalysed reaction is (2R,3R)-2,3-dihydroxy-3-methylpentanoate + NADP(+) = (S)-2-ethyl-2-hydroxy-3-oxobutanoate + NADPH + H(+). It functions in the pathway amino-acid biosynthesis; L-isoleucine biosynthesis; L-isoleucine from 2-oxobutanoate: step 2/4. It participates in amino-acid biosynthesis; L-valine biosynthesis; L-valine from pyruvate: step 2/4. Involved in the biosynthesis of branched-chain amino acids (BCAA). Catalyzes an alkyl-migration followed by a ketol-acid reduction of (S)-2-acetolactate (S2AL) to yield (R)-2,3-dihydroxy-isovalerate. In the isomerase reaction, S2AL is rearranged via a Mg-dependent methyl migration to produce 3-hydroxy-3-methyl-2-ketobutyrate (HMKB). In the reductase reaction, this 2-ketoacid undergoes a metal-dependent reduction by NADPH to yield (R)-2,3-dihydroxy-isovalerate. The sequence is that of Ketol-acid reductoisomerase (NADP(+)) from Geobacter sulfurreducens (strain ATCC 51573 / DSM 12127 / PCA).